The following is a 337-amino-acid chain: tRNA N6-adenosine threonylcarbamoyltransferase (337 aa).

His111 and His115 together coordinate Fe cation. Substrate contacts are provided by residues 134–138 (LVSGG), Asp167, Gly180, and Asn272. Residue Asp300 participates in Fe cation binding.

It belongs to the KAE1 / TsaD family. It depends on Fe(2+) as a cofactor.

It localises to the cytoplasm. It carries out the reaction L-threonylcarbamoyladenylate + adenosine(37) in tRNA = N(6)-L-threonylcarbamoyladenosine(37) in tRNA + AMP + H(+). In terms of biological role, required for the formation of a threonylcarbamoyl group on adenosine at position 37 (t(6)A37) in tRNAs that read codons beginning with adenine. Is involved in the transfer of the threonylcarbamoyl moiety of threonylcarbamoyl-AMP (TC-AMP) to the N6 group of A37, together with TsaE and TsaB. TsaD likely plays a direct catalytic role in this reaction. This Photorhabdus laumondii subsp. laumondii (strain DSM 15139 / CIP 105565 / TT01) (Photorhabdus luminescens subsp. laumondii) protein is tRNA N6-adenosine threonylcarbamoyltransferase.